A 107-amino-acid chain; its full sequence is Iron-binding protein IscA (107 aa).

The Fe cation site is built by cysteine 35, cysteine 99, and cysteine 101.

The protein belongs to the HesB/IscA family. Homodimer; may form tetramers and higher multimers. Requires Fe cation as cofactor.

Is able to transfer iron-sulfur clusters to apo-ferredoxin. Multiple cycles of [2Fe2S] cluster formation and transfer are observed, suggesting that IscA acts catalytically. Recruits intracellular free iron so as to provide iron for the assembly of transient iron-sulfur cluster in IscU in the presence of IscS, L-cysteine and the thioredoxin reductase system TrxA/TrxB. In Cronobacter sakazakii (strain ATCC BAA-894) (Enterobacter sakazakii), this protein is Iron-binding protein IscA.